We begin with the raw amino-acid sequence, 258 residues long: Acetylglutamate kinase (258 aa).

Residues 44–45 (GG), R66, and N158 each bind substrate. ATP contacts are provided by residues 181-186 (DVSGIL) and 209-211 (IIT).

This sequence belongs to the acetylglutamate kinase family. ArgB subfamily. Homodimer.

The protein resides in the cytoplasm. The enzyme catalyses N-acetyl-L-glutamate + ATP = N-acetyl-L-glutamyl 5-phosphate + ADP. It participates in amino-acid biosynthesis; L-arginine biosynthesis; N(2)-acetyl-L-ornithine from L-glutamate: step 2/4. In terms of biological role, catalyzes the ATP-dependent phosphorylation of N-acetyl-L-glutamate. The protein is Acetylglutamate kinase of Yersinia pestis bv. Antiqua (strain Antiqua).